A 393-amino-acid chain; its full sequence is Pyridinium-3,5-bisthiocarboxylic acid mononucleotide nickel insertion protein (393 aa).

The protein belongs to the LarC family.

The enzyme catalyses Ni(II)-pyridinium-3,5-bisthiocarboxylate mononucleotide = pyridinium-3,5-bisthiocarboxylate mononucleotide + Ni(2+). Functionally, involved in the biosynthesis of a nickel-pincer cofactor ((SCS)Ni(II) pincer complex). Binds Ni(2+), and functions in nickel delivery to pyridinium-3,5-bisthiocarboxylic acid mononucleotide (P2TMN), to form the mature cofactor. Is thus probably required for the activation of nickel-pincer cofactor-dependent enzymes. The polypeptide is Pyridinium-3,5-bisthiocarboxylic acid mononucleotide nickel insertion protein (Nocardioides sp. (strain ATCC BAA-499 / JS614)).